The sequence spans 477 residues: Putative 4-(hydroxymethyl)benzenesulfonate dehydrogenase TsaD2 (477 aa).

NAD(+) contacts are provided by residues 154-155, 178-181, and 230-231; these read WN, KAAE, and GS. Catalysis depends on E252, which acts as the Proton acceptor. L253 serves as a coordination point for NAD(+). Residue C286 is the Nucleophile of the active site. E381 lines the NAD(+) pocket.

Belongs to the aldehyde dehydrogenase family. As to quaternary structure, homodimer.

It catalyses the reaction 4-(hydroxymethyl)benzenesulfonate + NAD(+) = 4-formylbenzenesulfonate + NADH + H(+). Involved in the toluene-4-sulfonate degradation pathway. Does not discriminate between the sulfonate and the carboxyl substituents and can also be involved in the p-toluenecarboxylate degradation pathway. This Comamonas testosteroni (Pseudomonas testosteroni) protein is Putative 4-(hydroxymethyl)benzenesulfonate dehydrogenase TsaD2 (tsaD2).